We begin with the raw amino-acid sequence, 162 residues long: Serine-protein kinase RsbW (162 aa).

The protein belongs to the anti-sigma-factor family.

It carries out the reaction L-seryl-[protein] + ATP = O-phospho-L-seryl-[protein] + ADP + H(+). The catalysed reaction is L-threonyl-[protein] + ATP = O-phospho-L-threonyl-[protein] + ADP + H(+). Negative regulator of sigma-B activity. Phosphorylates and inactivates its specific antagonist protein, RsbV. Upon phosphorylation of RsbV, RsbW is released and binds to sigma-B, thereby blocking its ability to form an RNA polymerase holoenzyme (E-sigma-B). This Halalkalibacterium halodurans (strain ATCC BAA-125 / DSM 18197 / FERM 7344 / JCM 9153 / C-125) (Bacillus halodurans) protein is Serine-protein kinase RsbW.